The chain runs to 509 residues: Probable xyloglucan galactosyltransferase GT12 (509 aa).

The Cytoplasmic segment spans residues 1 to 3 (MMK). The chain crosses the membrane as a helical; Signal-anchor for type II membrane protein span at residues 4 to 24 (PVPKLWVVISSAFVFCLLVLF). The Lumenal portion of the chain corresponds to 25–509 (QINKSDLIEA…KLEIIHEKTA (485 aa)). Residues Asn-27, Asn-59, Asn-65, Asn-169, Asn-170, Asn-195, Asn-257, and Asn-416 are each glycosylated (N-linked (GlcNAc...) asparagine).

The protein belongs to the glycosyltransferase 47 family. As to expression, expressed in pollen grains.

The protein resides in the golgi apparatus membrane. Functionally, functions in xyloglucan synthesis by adding side chains to the xylosylated glucan backbone. Involved in the galactosylation of hemicellulose xyloglucan. The chain is Probable xyloglucan galactosyltransferase GT12 from Arabidopsis thaliana (Mouse-ear cress).